The sequence spans 1485 residues: Putative E3 ubiquitin-protein ligase LIN-1 (1485 aa).

Positions 337–353 (EENEDDSDSELENESVD) are enriched in acidic residues. Disordered regions lie at residues 337–363 (EENE…IFSP) and 384–417 (NQIP…KRDS). The 76-residue stretch at 510 to 585 (KPPKDFVCPI…TSWKEQNPEL (76 aa)) folds into the U-box domain. WD repeat units lie at residues 1204–1241 (SSNG…PRVI), 1246–1283 (EHTK…IKCI), 1409–1448 (SLST…RVAS), and 1454–1485 (GHTK…WALD).

In terms of tissue distribution, expressed in roots and nodules, and at very low levels in calli and seedling shoots.

The enzyme catalyses S-ubiquitinyl-[E2 ubiquitin-conjugating enzyme]-L-cysteine + [acceptor protein]-L-lysine = [E2 ubiquitin-conjugating enzyme]-L-cysteine + N(6)-ubiquitinyl-[acceptor protein]-L-lysine.. Its pathway is protein modification; protein ubiquitination. Its function is as follows. Putative E3 ubiquitin-protein ligase involved in the rhizobial infection process. Plays an important role in the early steps of infection thread formation and in growth and differentiation of nodules. This Lotus japonicus (Lotus corniculatus var. japonicus) protein is Putative E3 ubiquitin-protein ligase LIN-1.